The sequence spans 1037 residues: Exportin-T (1037 aa).

Belongs to the exportin family.

Its subcellular location is the nucleus. It is found in the cytoplasm. In terms of biological role, tRNA nucleus export receptor which facilitates tRNA translocation across the nuclear pore complex. Involved in pre-tRNA splicing, probably by affecting the interaction of pre-tRNA with splicing endonuclease. The protein is Exportin-T (los1) of Neosartorya fischeri (strain ATCC 1020 / DSM 3700 / CBS 544.65 / FGSC A1164 / JCM 1740 / NRRL 181 / WB 181) (Aspergillus fischerianus).